Reading from the N-terminus, the 319-residue chain is Class I histocompatibility antigen, Non-RT1.A alpha-1 chain (319 aa).

The N-terminal stretch at 1-24 is a signal peptide; it reads MGAMAPRTLLLLLAAVLAPTQTWA. An alpha-1 region spans residues 25–114; the sequence is GSHSLRYFHT…LLSYYNQSEG (90 aa). Residues 25–307 are Extracellular-facing; the sequence is GSHSLRYFHT…WEPSPSTDSN (283 aa). A glycan (N-linked (GlcNAc...) asparagine) is linked at Asn-110. The alpha-2 stretch occupies residues 115-206; it reads GSHTIQRMYG…ERGKETLLRS (92 aa). 2 disulfide bridges follow: Cys-125/Cys-188 and Cys-227/Cys-283. The tract at residues 207–298 is alpha-3; it reads DPPEAHVTLH…GLPEPLSQRW (92 aa). The 87-residue stretch at 209–295 folds into the Ig-like C1-type domain; that stretch reads PEAHVTLHPR…EHEGLPEPLS (87 aa). The N-linked (GlcNAc...) asparagine glycan is linked to Asn-280. The connecting peptide stretch occupies residues 299–307; sequence EPSPSTDSN. A helical membrane pass occupies residues 308–319; the sequence is LLLLFLELWQFL.

It belongs to the MHC class I family. In terms of assembly, heterodimer of an alpha chain and a beta chain (beta-2-microglobulin).

It localises to the membrane. Functionally, involved in the presentation of foreign antigens to the immune system. In Rattus norvegicus (Rat), this protein is Class I histocompatibility antigen, Non-RT1.A alpha-1 chain (RT1-Aw2).